The following is a 202-amino-acid chain: V-type ATP synthase subunit D (202 aa).

It belongs to the V-ATPase D subunit family.

Functionally, produces ATP from ADP in the presence of a proton gradient across the membrane. This is V-type ATP synthase subunit D (atpD) from Borreliella burgdorferi (strain ATCC 35210 / DSM 4680 / CIP 102532 / B31) (Borrelia burgdorferi).